The sequence spans 230 residues: Cytidylate kinase (230 aa).

Position 16–24 (16–24 (GPASAGKST)) interacts with ATP.

This sequence belongs to the cytidylate kinase family. Type 1 subfamily.

It localises to the cytoplasm. The catalysed reaction is CMP + ATP = CDP + ADP. The enzyme catalyses dCMP + ATP = dCDP + ADP. The chain is Cytidylate kinase from Lactobacillus johnsonii (strain CNCM I-12250 / La1 / NCC 533).